Consider the following 135-residue polypeptide: Nucleoside diphosphate kinase (135 aa).

ATP contacts are provided by Lys-9, Phe-57, Arg-85, Thr-91, Arg-102, and Asn-112. The Pros-phosphohistidine intermediate role is filled by His-115.

This sequence belongs to the NDK family. In terms of assembly, homotetramer. It depends on Mg(2+) as a cofactor.

Its subcellular location is the cytoplasm. The catalysed reaction is a 2'-deoxyribonucleoside 5'-diphosphate + ATP = a 2'-deoxyribonucleoside 5'-triphosphate + ADP. It carries out the reaction a ribonucleoside 5'-diphosphate + ATP = a ribonucleoside 5'-triphosphate + ADP. Functionally, major role in the synthesis of nucleoside triphosphates other than ATP. The ATP gamma phosphate is transferred to the NDP beta phosphate via a ping-pong mechanism, using a phosphorylated active-site intermediate. The polypeptide is Nucleoside diphosphate kinase (Thermobifida fusca (strain YX)).